A 505-amino-acid chain; its full sequence is ATP synthase subunit alpha (505 aa).

170 to 177 (GDRQTGKT) is a binding site for ATP.

It belongs to the ATPase alpha/beta chains family. F-type ATPases have 2 components, CF(1) - the catalytic core - and CF(0) - the membrane proton channel. CF(1) has five subunits: alpha(3), beta(3), gamma(1), delta(1), epsilon(1). CF(0) has four main subunits: a(1), b(1), b'(1) and c(9-12).

The protein localises to the cellular thylakoid membrane. The enzyme catalyses ATP + H2O + 4 H(+)(in) = ADP + phosphate + 5 H(+)(out). Its function is as follows. Produces ATP from ADP in the presence of a proton gradient across the membrane. The alpha chain is a regulatory subunit. This chain is ATP synthase subunit alpha, found in Prochlorococcus marinus (strain MIT 9515).